The primary structure comprises 367 residues: Glutamate 5-kinase (367 aa).

Position 10 (Lys10) interacts with ATP. Ser50, Asp137, and Asn149 together coordinate substrate. ATP-binding positions include 169-170 and 211-217; these read TD and TGGMATK. In terms of domain architecture, PUA spans 275–353; it reads AGEITVDDGA…QQISEILGYE (79 aa).

The protein belongs to the glutamate 5-kinase family.

It is found in the cytoplasm. It catalyses the reaction L-glutamate + ATP = L-glutamyl 5-phosphate + ADP. Its pathway is amino-acid biosynthesis; L-proline biosynthesis; L-glutamate 5-semialdehyde from L-glutamate: step 1/2. Catalyzes the transfer of a phosphate group to glutamate to form L-glutamate 5-phosphate. The polypeptide is Glutamate 5-kinase (Yersinia pseudotuberculosis serotype IB (strain PB1/+)).